Consider the following 460-residue polypeptide: Mogroside I-E synthase (460 aa).

His-25 acts as the Proton acceptor in catalysis. Asp-114 acts as the Charge relay in catalysis. UDP-alpha-D-glucose contacts are provided by Ser-286, Cys-339, Gln-341, Trp-359, Asn-360, Ser-361, Glu-364, Asp-380, and Gln-381.

Belongs to the UDP-glycosyltransferase family. In terms of tissue distribution, highly expressed in young fruits 15 days after anthesis (15-DAA).

The catalysed reaction is mogrol + UDP-alpha-D-glucose = mogroside IE + UDP + H(+). It catalyses the reaction mogroside I-A1 + UDP-alpha-D-glucose = mogroside IIE + UDP + H(+). The enzyme catalyses mogroside II-A1 + UDP-alpha-D-glucose = mogroside IIIX + UDP + H(+). It carries out the reaction mogroside II-A + UDP-alpha-D-glucose = mogroside III + UDP + H(+). The catalysed reaction is mogroside III-A1 + UDP-alpha-D-glucose = siamenoside I + UDP + H(+). Its pathway is secondary metabolite biosynthesis; terpenoid biosynthesis. Functionally, UDP-glycosyltransferase involved in the biosynthesis of cucurbitacin and mogroside tetracyclic triterpene natural products (e.g. siamenoside I and mogrosides IV, V and VI). Cucurbitacins have cytotoxic properties and exhibit deterrent taste as a defense barrier against herbivores. Mogrosides are nonsugar highly oxygenated compounds used as high-intensity zero-calorie sweeteners; they also possess pharmacological properties such as regulating immunity, lowering blood sugar and lipid levels, protecting the liver, and acting as antioxidants and antitumor agents. Catalyzes the C3 primary glucosylation of mogrol, mogroside I-A1, mogroside II-A1, mogroside II-A and mogroside III-A1. In Siraitia grosvenorii (Monk's fruit), this protein is Mogroside I-E synthase.